Reading from the N-terminus, the 375-residue chain is Adiponectin receptor protein 1 (375 aa).

The interval 1–60 is disordered; that stretch reads MSSHKGSAGAQGNGAPSGNREADTVELAELGPLLEEKGKRAASSPAKAEEDQACPVPQEE. Residues 1–136 are Cytoplasmic-facing; it reads MSSHKGSAGA…SIFRIHTETG (136 aa). A helical transmembrane segment spans residues 137–157; it reads NIWTHLLGFVLFLFLGILTML. The Extracellular segment spans residues 158–170; it reads RPNMYFMAPLQEK. Residues 171–191 form a helical membrane-spanning segment; sequence VVFGMFFLGAVLCLSFSWLFH. H191 contributes to the Zn(2+) binding site. At 192 to 203 the chain is on the cytoplasmic side; sequence TVYCHSEKVSRT. The helical transmembrane segment at 204–224 threads the bilayer; sequence FSKLDYSGIALLIMGSFVPWL. Residues 225 to 234 are Extracellular-facing; sequence YYSFYCSPQP. Residues 235-255 traverse the membrane as a helical segment; sequence RLIYLSIVCVLGISAIIVAQW. Topologically, residues 256–264 are cytoplasmic; that stretch reads DRFATPKHR. Residues 265–285 traverse the membrane as a helical segment; sequence QTRAGVFLGLGLSGVVPTMHF. Residues 286-298 lie on the Extracellular side of the membrane; the sequence is TIAEGFVKATTVG. The helical transmembrane segment at 299-319 threads the bilayer; the sequence is QMGWFFLMAVMYITGAGLYAA. Residues 320–337 lie on the Cytoplasmic side of the membrane; the sequence is RIPERFFPGKFDIWFQSH. Zn(2+) contacts are provided by H337 and H341. The chain crosses the membrane as a helical span at residues 338–358; that stretch reads QIFHVLVVAAAFVHFYGVSNL. The Extracellular portion of the chain corresponds to 359 to 375; sequence QEFRYGLEGGCTDDSLL.

Belongs to the ADIPOR family. May form homooligomers and heterooligomers with ADIPOR2. Interacts with APPL2 (via BAR domain); hinders the accessibility of APPL1 to ADIPOR1; negatively regulates adiponectin signaling; ADIPOQ dissociates this interaction and facilitates the recruitment of APPL1 to ADIPOR1. Interacts with APPL1; ADIPOQ enhances this interaction; inhibites adiponectin-stimulated binding of APPL2 to ADIPOR1. As to expression, detected in brain and quadriceps muscle (at protein level). Widely expressed. Expressed in heart, kidney, liver, lung, skeletal muscle, white adipose tissue, brown adipose tissue, aorta and spleen. Weakly expressed in brain and testis.

The protein localises to the cell membrane. Functionally, receptor for ADIPOQ, an essential hormone secreted by adipocytes that regulates glucose and lipid metabolism. Required for normal glucose and fat homeostasis and for maintaining a normal body weight. ADIPOQ-binding activates a signaling cascade that leads to increased AMPK activity, and ultimately to increased fatty acid oxidation, increased glucose uptake and decreased gluconeogenesis. Has high affinity for globular adiponectin and low affinity for full-length adiponectin. The protein is Adiponectin receptor protein 1 of Mus musculus (Mouse).